Here is a 380-residue protein sequence, read N- to C-terminus: Asporin (380 aa).

Positions 1–14 (MKEYVLLLFLALCS) are cleaved as a signal peptide. Positions 15-32 (AKPFFSPSHIALKNMMLK) are excised as a propeptide. A compositionally biased stretch (acidic residues) spans 35 to 54 (EDTDDDDDDDDDDDDDDEDN). Positions 35–59 (EDTDDDDDDDDDDDDDDEDNSLFPT) are disordered. Serine 55 carries an O-linked (GalNAc...) serine glycan. The LRRNT domain maps to 66–102 (FFPFDLFPMCPFGCQCYSRVVHCSDLGLTSVPTNIPF). Cystine bridges form between cysteine 75–cysteine 81 and cysteine 79–cysteine 88. 11 LRR repeats span residues 103–124 (DTRMLDLQNNKIKEIKENDFKG), 127–148 (SLYGLILNNNKLTKIHPKAFLT), 151–173 (KLRRLYLSHNQLSEIPLNLPKSL), 174–193 (AELRIHENKVKKIQKDTFKG), 196–219 (ALHVLEMSANPLDNNGIEPGAFEG), 242–263 (TLLELHLDYNKISTVELEDFKR), 266–287 (ELQRLGLGNNKITDIENGSLAN), 290–312 (RVREIHLENNKLKKIPSGLPELK), 313–334 (YLQIIFLHSNSIARVGVNDFCP), 335–357 (TVPKMKKSLYSAISLFNNPVKYW), and 358–380 (EMQPATFRCVLSRMSVQLGNFGM). The interval 166–212 (PLNLPKSLAELRIHENKVKKIQKDTFKGMNALHVLEMSANPLDNNGI) is interaction with TGFB1. The N-linked (GlcNAc...) asparagine glycan is linked to asparagine 282. Cysteine 333 and cysteine 366 are oxidised to a cystine.

It belongs to the small leucine-rich proteoglycan (SLRP) family. SLRP class I subfamily. In terms of assembly, interacts with TGFB1, TGFB2 and TGFB3. DCN, BGN, and FMOD inhibit binding to TGFB1. Interacts with BMP2. Interacts in vitro with type II collagen. Interacts with type I collagen. DCN can inhibit collagen binding. There is no serine/glycine dipeptide sequence expected for the attachment of O-linked glycosaminoglycans and this is probably not a proteoglycan. The O-linked polysaccharide on 54-Ser is probably the mucin type linked to GalNAc. In terms of processing, the N-linked glycan at Asn-282 is composed of variable structures of GlcNAc, mannose, fucose, HexNAc and hexose. In terms of tissue distribution, higher levels in osteoarthritic articular cartilage, aorta, uterus. Moderate expression in small intestine, heart, liver, bladder, ovary, stomach, and in the adrenal, thyroid, and mammary glands. Low expression in trachea, bone marrow, and lung. Colocalizes with TGFB1 in chondrocytes within osteoarthritic (OA) lesions of articular cartilage.

Its subcellular location is the secreted. The protein localises to the extracellular space. It is found in the extracellular matrix. Negatively regulates periodontal ligament (PDL) differentiation and mineralization to ensure that the PDL is not ossified and to maintain homeostasis of the tooth-supporting system. Inhibits BMP2-induced cytodifferentiation of PDL cells by preventing its binding to BMPR1B/BMP type-1B receptor, resulting in inhibition of BMP-dependent activation of SMAD proteins. Critical regulator of TGF-beta in articular cartilage and plays an essential role in cartilage homeostasis and osteoarthritis (OA) pathogenesis. Negatively regulates chondrogenesis in the articular cartilage by blocking the TGF-beta/receptor interaction on the cell surface and inhibiting the canonical TGF-beta/Smad signal. Binds calcium and plays a role in osteoblast-driven collagen biomineralization activity. In Homo sapiens (Human), this protein is Asporin (ASPN).